We begin with the raw amino-acid sequence, 72 residues long: Large ribosomal subunit protein uL29 (72 aa).

The protein belongs to the universal ribosomal protein uL29 family.

The protein is Large ribosomal subunit protein uL29 of Chlamydia caviae (strain ATCC VR-813 / DSM 19441 / 03DC25 / GPIC) (Chlamydophila caviae).